The primary structure comprises 1342 residues: DNA-directed RNA polymerase subunit beta (1342 aa).

Residues K1022 and K1200 each carry the N6-acetyllysine modification.

The protein belongs to the RNA polymerase beta chain family. As to quaternary structure, the RNAP catalytic core consists of 2 alpha, 1 beta, 1 beta' and 1 omega subunit. When a sigma factor is associated with the core the holoenzyme is formed, which can initiate transcription.

The catalysed reaction is RNA(n) + a ribonucleoside 5'-triphosphate = RNA(n+1) + diphosphate. DNA-dependent RNA polymerase catalyzes the transcription of DNA into RNA using the four ribonucleoside triphosphates as substrates. This Shigella flexneri serotype 5b (strain 8401) protein is DNA-directed RNA polymerase subunit beta.